We begin with the raw amino-acid sequence, 120 residues long: Glycine cleavage system H protein (120 aa).

The region spanning V17 to K99 is the Lipoyl-binding domain. Position 58 is an N6-lipoyllysine (K58).

Belongs to the GcvH family. In terms of assembly, the glycine cleavage system is composed of four proteins: P, T, L and H. Requires (R)-lipoate as cofactor.

Functionally, the glycine cleavage system catalyzes the degradation of glycine. The H protein shuttles the methylamine group of glycine from the P protein to the T protein. This is Glycine cleavage system H protein from Rhizobium leguminosarum bv. trifolii (strain WSM2304).